Here is a 21-residue protein sequence, read N- to C-terminus: Basic phospholipase A2 BjIV (21 aa).

The protein belongs to the phospholipase A2 family. Group II subfamily. Can form dimers, trimers and tetramers. Requires Ca(2+) as cofactor. In terms of processing, contains seven disulfide bonds. In terms of tissue distribution, expressed by the venom gland.

The protein localises to the secreted. The catalysed reaction is a 1,2-diacyl-sn-glycero-3-phosphocholine + H2O = a 1-acyl-sn-glycero-3-phosphocholine + a fatty acid + H(+). Its activity is regulated as follows. Inhibited by crotapotin. Snake venom phospholipase A2 has a high enzymatic activity and produces moderate myonecrosis in skeletal muscle, but shows no neuromuscular activity in mouse phrenic nerve-diaphragm preparations. PLA2 catalyzes the calcium-dependent hydrolysis of the 2-acyl groups in 3-sn-phosphoglycerides. The protein is Basic phospholipase A2 BjIV of Bothrops jararacussu (Jararacussu).